Reading from the N-terminus, the 625-residue chain is Cytochrome c oxidase subunit 1 (625 aa).

A helical membrane pass occupies residues 23 to 43; the sequence is IAIMYLIAGTLFFVKAGVMAL. Position 69 (H69) interacts with Fe(II)-heme a. The next 6 membrane-spanning stretches (helical) occupy residues 72–92, 99–119, 151–171, 195–215, 240–260, and 272–292; these read IMLF…VIPL, VAFP…GLLL, FYVL…INFL, FISS…LALL, IFWI…FGII, and LFGY…GFMV. 2 residues coordinate Cu cation: H246 and Y250. Residues 246–250 constitute a cross-link (1'-histidyl-3'-tyrosine (His-Tyr)); sequence HPEVY. H295 and H296 together coordinate Cu cation. 2 helical membrane passes run 309–329 and 343–363; these read IFAV…FNWL and MLFA…GVML. H381 contributes to the heme a3 binding site. Transmembrane regions (helical) follow at residues 382-402, 417-437, 460-480, 551-571, and 577-597; these read FHYI…FYWY, LFFW…HLLG, ISTI…INVI, SILP…LIML, and IINP…CMFV. H383 is a binding site for Fe(II)-heme a.

It belongs to the heme-copper respiratory oxidase family.

The protein resides in the cell membrane. The enzyme catalyses 4 Fe(II)-[cytochrome c] + O2 + 8 H(+)(in) = 4 Fe(III)-[cytochrome c] + 2 H2O + 4 H(+)(out). The protein operates within energy metabolism; oxidative phosphorylation. Cytochrome c oxidase is the component of the respiratory chain that catalyzes the reduction of oxygen to water. Subunits 1-3 form the functional core of the enzyme complex. CO I is the catalytic subunit of the enzyme. Electrons originating in cytochrome c are transferred via the copper A center of subunit 2 and heme A of subunit 1 to the bimetallic center formed by heme A3 and copper B. The protein is Cytochrome c oxidase subunit 1 (ctaD) of Alkalihalophilus pseudofirmus (strain ATCC BAA-2126 / JCM 17055 / OF4) (Bacillus pseudofirmus).